Consider the following 300-residue polypeptide: Cholesterol 25-hydroxylase-like protein (300 aa).

N9 carries N-linked (GlcNAc...) asparagine glycosylation. Helical transmembrane passes span 54–73 (YTWV…VPFF), 95–115 (LQGW…LIWV), and 130–152 (MLSQ…HYIN). In terms of domain architecture, Fatty acid hydroxylase spans 135 to 266 (AIFFLAFDFT…WFNYLDRLMG (132 aa)). Residues 148–152 (FHYIN) carry the Histidine box-1 motif. The short motif at 163-167 (HSVHH) is the Histidine box-2 element. Residues 192-212 (ITTIPWIFPTHCLTYWIWFFI) form a helical membrane-spanning segment. Residues 242-248 (AHDMHHL) carry the Histidine box-3 motif.

This sequence belongs to the sterol desaturase family. It depends on Fe cation as a cofactor.

Its subcellular location is the membrane. Functionally, probable sterol desaturase. This is Cholesterol 25-hydroxylase-like protein from Caenorhabditis elegans.